The sequence spans 271 residues: Tryptophan synthase alpha chain (271 aa).

Catalysis depends on proton acceptor residues glutamate 49 and aspartate 60.

It belongs to the TrpA family. Tetramer of two alpha and two beta chains.

It carries out the reaction (1S,2R)-1-C-(indol-3-yl)glycerol 3-phosphate + L-serine = D-glyceraldehyde 3-phosphate + L-tryptophan + H2O. It functions in the pathway amino-acid biosynthesis; L-tryptophan biosynthesis; L-tryptophan from chorismate: step 5/5. Its function is as follows. The alpha subunit is responsible for the aldol cleavage of indoleglycerol phosphate to indole and glyceraldehyde 3-phosphate. The protein is Tryptophan synthase alpha chain of Aromatoleum aromaticum (strain DSM 19018 / LMG 30748 / EbN1) (Azoarcus sp. (strain EbN1)).